Here is a 131-residue protein sequence, read N- to C-terminus: Holo-[acyl-carrier-protein] synthase (131 aa).

Residues aspartate 8 and glutamate 58 each contribute to the Mg(2+) site.

The protein belongs to the P-Pant transferase superfamily. AcpS family. Requires Mg(2+) as cofactor.

It localises to the cytoplasm. The catalysed reaction is apo-[ACP] + CoA = holo-[ACP] + adenosine 3',5'-bisphosphate + H(+). In terms of biological role, transfers the 4'-phosphopantetheine moiety from coenzyme A to a Ser of acyl-carrier-protein. This is Holo-[acyl-carrier-protein] synthase from Oenococcus oeni (strain ATCC BAA-331 / PSU-1).